Consider the following 409-residue polypeptide: Glucan endo-1,6-beta-glucosidase B (409 aa).

An N-terminal signal peptide occupies residues 1 to 16 (MKFILPLFTSLPVALA). N35 carries an N-linked (GlcNAc...) asparagine glycan. The active-site Proton donor is the E228. The active-site Nucleophile is E330.

It belongs to the glycosyl hydrolase 5 (cellulase A) family.

It localises to the secreted. It catalyses the reaction Random hydrolysis of (1-&gt;6)-linkages in (1-&gt;6)-beta-D-glucans.. Beta-glucanases participate in the metabolism of beta-glucan, the main structural component of the cell wall. Acts on lutean, pustulan and 1,6-oligo-beta-D-glucosides. The chain is Glucan endo-1,6-beta-glucosidase B (exgB) from Emericella nidulans (strain FGSC A4 / ATCC 38163 / CBS 112.46 / NRRL 194 / M139) (Aspergillus nidulans).